The primary structure comprises 560 residues: Protein DA1-related 7 (560 aa).

3 consecutive UIM domains span residues 43–62, 92–111, and 155–174; these read SEAD…QETS, EEDQ…KGKS, and NEDA…KGQI. The 71-residue stretch at 199-269 folds into the LIM zinc-binding domain; that stretch reads SICDGCKSAI…HVCKKKFPGR (71 aa).

Interacts with ubiquitin.

In terms of biological role, ubiquitin receptor that probably regulates developmental process. In Arabidopsis thaliana (Mouse-ear cress), this protein is Protein DA1-related 7 (DAR7).